The primary structure comprises 399 residues: Argininosuccinate synthase (399 aa).

ATP is bound by residues 10–18 (AYSGGVDTS) and A38. Residue Y89 coordinates L-citrulline. Residue G119 coordinates ATP. Positions 121, 125, and 126 each coordinate L-aspartate. An L-citrulline-binding site is contributed by N125. L-citrulline contacts are provided by R129, S177, S186, E262, and Y274.

This sequence belongs to the argininosuccinate synthase family. Type 1 subfamily. In terms of assembly, homotetramer.

It is found in the cytoplasm. It catalyses the reaction L-citrulline + L-aspartate + ATP = 2-(N(omega)-L-arginino)succinate + AMP + diphosphate + H(+). The protein operates within amino-acid biosynthesis; L-arginine biosynthesis; L-arginine from L-ornithine and carbamoyl phosphate: step 2/3. The polypeptide is Argininosuccinate synthase (Rippkaea orientalis (strain PCC 8801 / RF-1) (Cyanothece sp. (strain PCC 8801))).